Consider the following 835-residue polypeptide: Protein translocase subunit SecA 1 (835 aa).

Residues Gln-85, 103–107 (GEGKT), and Asp-492 each bind ATP. Residues 788 to 807 (VQGEAVHPSSDGEEAKKKPV) form a disordered region. Positions 819, 821, 830, and 831 each coordinate Zn(2+).

The protein belongs to the SecA family. In terms of assembly, monomer and homodimer. Part of the essential Sec protein translocation apparatus which comprises SecA, SecYEG and auxiliary proteins SecDF. Other proteins may also be involved. Zn(2+) serves as cofactor.

The protein localises to the cell membrane. It localises to the cytoplasm. It carries out the reaction ATP + H2O + cellular proteinSide 1 = ADP + phosphate + cellular proteinSide 2.. Functionally, part of the Sec protein translocase complex. Interacts with the SecYEG preprotein conducting channel. Has a central role in coupling the hydrolysis of ATP to the transfer of proteins into and across the cell membrane, serving as an ATP-driven molecular motor driving the stepwise translocation of polypeptide chains across the membrane. The chain is Protein translocase subunit SecA 1 from Bacillus thuringiensis (strain Al Hakam).